A 361-amino-acid chain; its full sequence is Hsc70-interacting protein (361 aa).

The disordered stretch occupies residues 39–98 (GGTIPPAPASTSTDETSKGKAEEQPEEPVKSPEPESEESDLEIDNEGVIEPDNDDPQEMG). Over residues 53–71 (ETSKGKAEEQPEEPVKSPE) the composition is skewed to basic and acidic residues. The segment covering 72–98 (PESEESDLEIDNEGVIEPDNDDPQEMG) has biased composition (acidic residues). TPR repeat units follow at residues 112–145 (ANEK…NPCL), 147–179 (ILYA…NPDS), and 181–213 (QTYK…DYDE). Residues 254 to 270 (KAREEHERAQREEEARR) are compositionally biased toward basic and acidic residues. The tract at residues 254-292 (KAREEHERAQREEEARRQAGGAQFGGFPGGFPGGFPGAM) is disordered. Gly residues predominate over residues 275 to 292 (AQFGGFPGGFPGGFPGAM). Residues 311-350 (DPEVLAAMQDPEVMAAFQDVAQNPANMSKYQNNPKVMSLI) enclose the STI1 domain.

It belongs to the FAM10 family. In terms of assembly, homotetramer. Interacts with HSC70 as well as DNAJ homologs and HSP90.

It localises to the cytoplasm. Functionally, one HIP oligomer binds the ATPase domains of at least two HSC70 molecules dependent on activation of the HSC70 ATPase by HSP40. Stabilizes the ADP state of HSC70 that has a high affinity for substrate protein. Through its own chaperone activity, it may contribute to the interaction of HSC70 with various target proteins. The polypeptide is Hsc70-interacting protein (ST13) (Gallus gallus (Chicken)).